The primary structure comprises 495 residues: Transcription termination/antitermination protein NusA (495 aa).

The S1 motif domain maps to 135–200 (GQIITGIVKK…RGAQLFLSRS (66 aa)). Residues 302–370 (HHTMDIAVDS…KNLNVSEKVI (69 aa)) form the KH domain. 2 tandem repeats follow at residues 364–414 (NVSE…KNGL) and 439–489 (GMNE…RNIC). The interval 364–489 (NVSEKVIKTL…LLIMAARNIC (126 aa)) is 2 X 51 AA approximate repeats.

The protein belongs to the NusA family. In terms of assembly, monomer. Binds directly to the core enzyme of the DNA-dependent RNA polymerase and to nascent RNA.

The protein localises to the cytoplasm. In terms of biological role, participates in both transcription termination and antitermination. In Buchnera aphidicola subsp. Schizaphis graminum (strain Sg), this protein is Transcription termination/antitermination protein NusA.